A 330-amino-acid chain; its full sequence is GMP reductase (330 aa).

Catalysis depends on Cys180, which acts as the Thioimidate intermediate. 209–232 (LIADGGIRHNGDIAKSVRFGASMV) is an NADP(+) binding site.

The protein belongs to the IMPDH/GMPR family. GuaC type 2 subfamily.

The catalysed reaction is IMP + NH4(+) + NADP(+) = GMP + NADPH + 2 H(+). Catalyzes the irreversible NADPH-dependent deamination of GMP to IMP. It functions in the conversion of nucleobase, nucleoside and nucleotide derivatives of G to A nucleotides, and in maintaining the intracellular balance of A and G nucleotides. The sequence is that of GMP reductase from Lactobacillus johnsonii (strain CNCM I-12250 / La1 / NCC 533).